A 139-amino-acid chain; its full sequence is MEAVVFLFSLLDCCALIFLSVYFIITLSDLECDYINARSCCSKLNKWVIPELVGHTIVTVLMLVSLHWFIFLLNLPVATWNIYRFIMVPSGNMGVFDPTEIHNRGQLKSHMKEAMIKLGFYLLCFFMYLYSMILALIND.

A run of 3 helical transmembrane segments spans residues 5-25, 57-77, and 118-138; these read VFLF…YFII, IVTV…NLPV, and LGFY…ALIN.

The protein belongs to the cornichon family. In terms of assembly, interacts with Sec23/24 complex components SEC24B and SEC24D. Interacts with CCR5. Interacts with ADRB2 in the early secretory pathway.

The protein localises to the membrane. It is found in the endoplasmic reticulum. The protein resides in the endoplasmic reticulum-Golgi intermediate compartment. Its function is as follows. Involved in G protein-coupled receptors (GPCRs) trafficking from the endoplasmic reticulum to the cell surface; it promotes the exit of GPCRs from the early secretory pathway, likely through interaction with the COPII machinery. The polypeptide is Protein cornichon homolog 4 (Cnih4) (Mus musculus (Mouse)).